The sequence spans 192 residues: uncharacterized protein (192 aa).

The helical; Signal-anchor transmembrane segment at 7–29 (FIHSISGGSSLLSASEVFASAFF) threads the bilayer. The helical transmembrane segment at 51-67 (YFLCVLVSTFLNSLVII) threads the bilayer.

The protein localises to the membrane. This is an uncharacterized protein from Saccharomyces cerevisiae (strain ATCC 204508 / S288c) (Baker's yeast).